The primary structure comprises 259 residues: Deoxyribose-phosphate aldolase (259 aa).

The active-site Proton donor/acceptor is the Asp102. Lys167 acts as the Schiff-base intermediate with acetaldehyde in catalysis. The active-site Proton donor/acceptor is Lys201.

This sequence belongs to the DeoC/FbaB aldolase family. DeoC type 2 subfamily.

The protein resides in the cytoplasm. The catalysed reaction is 2-deoxy-D-ribose 5-phosphate = D-glyceraldehyde 3-phosphate + acetaldehyde. It functions in the pathway carbohydrate degradation; 2-deoxy-D-ribose 1-phosphate degradation; D-glyceraldehyde 3-phosphate and acetaldehyde from 2-deoxy-alpha-D-ribose 1-phosphate: step 2/2. Functionally, catalyzes a reversible aldol reaction between acetaldehyde and D-glyceraldehyde 3-phosphate to generate 2-deoxy-D-ribose 5-phosphate. The sequence is that of Deoxyribose-phosphate aldolase from Edwardsiella ictaluri (strain 93-146).